We begin with the raw amino-acid sequence, 861 residues long: Leucine--tRNA ligase (861 aa).

Residues 42-52 carry the 'HIGH' region motif; that stretch reads PYPSGRLHMGH. Residues 619–623 carry the 'KMSKS' region motif; that stretch reads KMSKS. Position 622 (Lys622) interacts with ATP.

The protein belongs to the class-I aminoacyl-tRNA synthetase family.

It is found in the cytoplasm. It catalyses the reaction tRNA(Leu) + L-leucine + ATP = L-leucyl-tRNA(Leu) + AMP + diphosphate. This Haemophilus influenzae (strain PittGG) protein is Leucine--tRNA ligase.